Here is a 566-residue protein sequence, read N- to C-terminus: Proline--tRNA ligase (566 aa).

This sequence belongs to the class-II aminoacyl-tRNA synthetase family. ProS type 1 subfamily. As to quaternary structure, homodimer.

Its subcellular location is the cytoplasm. It catalyses the reaction tRNA(Pro) + L-proline + ATP = L-prolyl-tRNA(Pro) + AMP + diphosphate. Catalyzes the attachment of proline to tRNA(Pro) in a two-step reaction: proline is first activated by ATP to form Pro-AMP and then transferred to the acceptor end of tRNA(Pro). As ProRS can inadvertently accommodate and process non-cognate amino acids such as alanine and cysteine, to avoid such errors it has two additional distinct editing activities against alanine. One activity is designated as 'pretransfer' editing and involves the tRNA(Pro)-independent hydrolysis of activated Ala-AMP. The other activity is designated 'posttransfer' editing and involves deacylation of mischarged Ala-tRNA(Pro). The misacylated Cys-tRNA(Pro) is not edited by ProRS. The sequence is that of Proline--tRNA ligase from Bacillus cereus (strain Q1).